The following is a 435-amino-acid chain: Cytochrome c biogenesis protein CcsB (435 aa).

Transmembrane regions (helical) follow at residues 14 to 34, 72 to 92, and 162 to 182; these read LRLAILLLLLIAGASALGTIL, SVWFLSLLAWLGLALILCSWR, and VGPLLVHTGLVLLLIGAAWGA.

It belongs to the Ccs1/CcsB family. May interact with CcsA.

The protein resides in the cellular thylakoid membrane. Its function is as follows. Required during biogenesis of c-type cytochromes (cytochrome c6 and cytochrome f) at the step of heme attachment. This is Cytochrome c biogenesis protein CcsB from Synechococcus sp. (strain CC9311).